Here is a 212-residue protein sequence, read N- to C-terminus: Thymidylate kinase (212 aa).

10 to 17 is an ATP binding site; it reads GLEGAGKS.

This sequence belongs to the thymidylate kinase family.

The catalysed reaction is dTMP + ATP = dTDP + ADP. Functionally, phosphorylation of dTMP to form dTDP in both de novo and salvage pathways of dTTP synthesis. The sequence is that of Thymidylate kinase from Vibrio cholerae serotype O1 (strain ATCC 39541 / Classical Ogawa 395 / O395).